The following is a 257-amino-acid chain: MVSWMICRLVVLIFGMLYPAYASYKAVKSKNIREYVRWMMYWIVFAIFMAAETFTDIFISWFPFYYEIKMAFVLWLLSPYTKGASLLYRKFVHPSLSRHEKEIDACIVQAKERSYETMLSFGKRSLNMAASAAVQAATKSQGALAGRLRSFSMQDLRSIPDTSAPTYQDPLYLEDQAPRRRPPIGYRPGGLQDSDTEDECWSDNEIAPQPPVRPREKPLSRSQSLRVVKRKPLVREGTSRSLKVRTRKKTIPSDLDS.

2 helical membrane-spanning segments follow: residues 1–21 and 42–62; these read MVSW…YPAY and WIVF…ISWF. Phosphoserine occurs at positions 152 and 194. The segment at 159–257 is disordered; that stretch reads IPDTSAPTYQ…KKTIPSDLDS (99 aa). A Phosphothreonine modification is found at Thr-196. Ser-202 is subject to Phosphoserine. Thr-250 is subject to Phosphothreonine. Ser-253 bears the Phosphoserine mark.

Belongs to the DP1 family.

The protein resides in the endoplasmic reticulum membrane. Functionally, microtubule-binding protein required to ensure proper cell division and nuclear envelope reassembly by sequestering the endoplasmic reticulum away from chromosomes during mitosis. Probably acts by clearing the endoplasmic reticulum membrane from metaphase chromosomes. This is Receptor expression-enhancing protein 4 (Reep4) from Rattus norvegicus (Rat).